A 276-amino-acid chain; its full sequence is Large ribosomal subunit protein uL2 (276 aa).

Disordered regions lie at residues alanine 35 to glycine 55 and glycine 222 to lysine 276. Basic residues predominate over residues lysine 258–lysine 276.

Belongs to the universal ribosomal protein uL2 family. In terms of assembly, part of the 50S ribosomal subunit. Forms a bridge to the 30S subunit in the 70S ribosome.

Functionally, one of the primary rRNA binding proteins. Required for association of the 30S and 50S subunits to form the 70S ribosome, for tRNA binding and peptide bond formation. It has been suggested to have peptidyltransferase activity; this is somewhat controversial. Makes several contacts with the 16S rRNA in the 70S ribosome. This chain is Large ribosomal subunit protein uL2, found in Shouchella clausii (strain KSM-K16) (Alkalihalobacillus clausii).